The chain runs to 69 residues: Disintegrin EMF10A (69 aa).

The Disintegrin domain maps to 1–66 (MNSANPCCDP…DCPRNPWKSE (66 aa)). 4 disulfide bridges follow: Cys7–Cys30, Cys21–Cys27, Cys26–Cys51, and Cys39–Cys58. The Cell attachment site motif lies at 43-45 (RGD).

Belongs to the disintegrin family. Dimeric disintegrin subfamily. Heterodimer with EMF10B; disulfide-linked. As to expression, expressed by the venom gland.

The protein localises to the secreted. In terms of biological role, extremely potent and selective inhibitor of integrin alpha-5/beta-1 (ITGA5/ITGB1). Partially inhibits adhesion of cells expressing alpha-IIb/beta-3 (ITGA2B/ITGB3), alpha-V/beta-3 (ITGAV/ITGB3), and alpha-4/beta-1 (ITGA4/ITGB1) to appropriate ligands only at concentration higher than 500 nM. Weakly inhibits ADP-induced platelet aggregation. In Eristicophis macmahoni (Leaf-nosed viper), this protein is Disintegrin EMF10A.